The chain runs to 258 residues: GCN5-related N-acetyltransferase 2, chloroplastic (258 aa).

The N-terminal 58 residues, 1 to 58, are a transit peptide targeting the chloroplast; it reads MLLIPISSSSSSSISPPPNSYPSNHHSLFFSNLTFPIQHGSRKLKTLRLRANFWESIR. The interaction with begomoviruses NSP protein stretch occupies residues 107 to 194; the sequence is IIFSSGGEID…DHAFNATIWD (88 aa). The region spanning 107 to 258 is the N-acetyltransferase domain; it reads IIFSSGGEID…GIKGMFWYPK (152 aa). Acetyl-CoA-binding positions include 195–197, 203–208, 231–233, and Y238; these read VLV, GQGLGK, and DSQ. Y238 serves as the catalytic Proton donor.

The protein belongs to the acetyltransferase family. GNAT subfamily. In terms of assembly, oligomer. Interacts with begomoviruses NSP but not with CP. This interaction may allow NSP to recruit NSI monomers to acetylate viral genome-bound CP and thus regulate nuclear export of viral genome by NSP. S-sulfhydrated and activated by hydrogen sulfide H(2)S to promote melatonin accumulation and subsequent melatonin-dependent stomotal closure to combat osmotic stress. In terms of processing, autoacetylated. In terms of tissue distribution, highly expressed in cauline leaves and seeds, at lower levels in stems, siliques, inflorescences and rosettes leaves and at very low levels in roots. Expressed in the xylem parenchyma and phloem of the leaves and root, and in guard cells of young leaves.

The protein localises to the plastid. The protein resides in the chloroplast. The enzyme catalyses 5-methoxytryptamine + acetyl-CoA = melatonin + CoA + H(+). The catalysed reaction is L-lysyl-[histone] + acetyl-CoA = N(6)-acetyl-L-lysyl-[histone] + CoA + H(+). It carries out the reaction L-lysyl-[protein] + acetyl-CoA = N(6)-acetyl-L-lysyl-[protein] + CoA + H(+). It catalyses the reaction serotonin + acetyl-CoA = N-acetylserotonin + CoA + H(+). The enzyme catalyses N-terminal L-alanyl-[protein] + acetyl-CoA = N-terminal N(alpha)-acetyl-L-alanyl-[protein] + CoA + H(+). The catalysed reaction is N-terminal L-seryl-[protein] + acetyl-CoA = N-terminal N(alpha)-acetyl-L-seryl-[protein] + CoA + H(+). It carries out the reaction N-terminal L-valyl-[protein] + acetyl-CoA = N-terminal N(alpha)-acetyl-L-valyl-[protein] + CoA + H(+). It catalyses the reaction N-terminal glycyl-[protein] + acetyl-CoA = N-terminal N(alpha)-acetylglycyl-[protein] + CoA + H(+). The enzyme catalyses an N-terminal L-alpha-aminoacyl-[protein] + acetyl-CoA = N-terminal N(alpha)-acetyl-L-alpha-aminoacyl-[protein] + CoA + H(+). The catalysed reaction is N-terminal L-threonyl-[protein] + acetyl-CoA = N-terminal N(alpha)-acetyl-L-threonyl-[protein] + CoA + H(+). It carries out the reaction N-terminal L-methionyl-[protein] + acetyl-CoA = N-terminal N(alpha)-acetyl-L-methionyl-[protein] + CoA + H(+). It catalyses the reaction N-terminal L-leucyl-[protein] + acetyl-CoA = N-terminal N(alpha)-acetyl-L-leucyl-[protein] + CoA + H(+). Inhibited by the viral nuclear shuttle protein (NSP) that binds to the region required for oligomerization. Its function is as follows. Protein acetyltransferase with dual specificity triggering both N-alpha-acetylation (NTA), with a preference for alanine, serine, threonine, methionine and to a lower extent valine as substrates (can also use glycine and leucine), and epsilon-lysine acetylation (KA) of several plastid proteins. Triggers lysine acetylation in KEA1 and KEA2. Acetylates in vitro histones H2A and H3. Does not act as a transcriptional activator but required for the dynamic reorganization of thylakoid protein complexes and grana during photosynthetic state transitions. Involved in melatonin biosynthesis by catalyzing the formation of N-acetylserotonin (NAS) from serotonin and of melatonin (N-acetyl-5-methoxytryptamine) from 5-methoxytryptamine (5-MT). By triggering melatonin biosynthesis, contributes to the chloroplast protein quality control (CPQC), which plays a pivotal role in starch synthesis, and confers melatonin-associated tolerance to high light (HL) stress. Prevents the accumulation of oil and anthocyanin content in mature seeds and avoids seed germination in a melatonin-dependent manner, but promotes mucilage production in the seed coat. Contributes to melatonin-mediated anthocyanin production in cold-exposed seedlings. Implicated in melatonin-monitored circadian dynamics of stomatal aperture to minimize night water loss and promote drought tolerance, partly by triggering hydrogen sulfide H(2)S-dependent stomotal closure in response to osmotic stress. (Microbial infection) Required for begomovirus infection and systemic spread. In case of begomoviruses infection, acetylates the capsid protein (CP), but not the nuclear shuttle protein (NSP). Stimulates melatonin-triggered defense responses to the necrotrophic Botrytis cinerea. The sequence is that of GCN5-related N-acetyltransferase 2, chloroplastic from Arabidopsis thaliana (Mouse-ear cress).